A 163-amino-acid chain; its full sequence is Lipoprotein signal peptidase (163 aa).

The next 3 membrane-spanning stretches (helical) occupy residues 7 to 27, 64 to 84, and 99 to 119; these read LSFL…KYLV, WQKY…VYLL, and ALII…GFVV. Residues D120 and D138 contribute to the active site. A helical membrane pass occupies residues 133 to 153; the sequence is VFNVADIAICVGVGLLILDSF.

It belongs to the peptidase A8 family.

The protein resides in the cell inner membrane. It catalyses the reaction Release of signal peptides from bacterial membrane prolipoproteins. Hydrolyzes -Xaa-Yaa-Zaa-|-(S,diacylglyceryl)Cys-, in which Xaa is hydrophobic (preferably Leu), and Yaa (Ala or Ser) and Zaa (Gly or Ala) have small, neutral side chains.. The protein operates within protein modification; lipoprotein biosynthesis (signal peptide cleavage). Its function is as follows. This protein specifically catalyzes the removal of signal peptides from prolipoproteins. In Actinobacillus succinogenes (strain ATCC 55618 / DSM 22257 / CCUG 43843 / 130Z), this protein is Lipoprotein signal peptidase.